Consider the following 480-residue polypeptide: Gamma-aminobutyric acid receptor subunit rho-1 (480 aa).

Residues 1–21 form the signal peptide; it reads MLAVQNMKFGIFLLWWGWVLA. Residues 22–281 lie on the Extracellular side of the membrane; the sequence is AESTAHWPGR…LYINFTLRRH (260 aa). The segment covering 29-38 has biased composition (basic and acidic residues); it reads PGREVHEPSR. Residues 29–67 form a disordered region; that stretch reads PGREVHEPSRKGSRPQRQRRGAHDDAHKQGSPILRRSSD. A compositionally biased stretch (basic residues) spans 39–48; the sequence is KGSRPQRQRR. Residue arginine 126 coordinates 4-aminobutanoate. An N-linked (GlcNAc...) asparagine glycan is attached at asparagine 141. Residue serine 190 participates in 4-aminobutanoate binding. An intrachain disulfide couples cysteine 199 to cysteine 213. Residue glutamate 218 coordinates 4-aminobutanoate. Asparagine 235 and asparagine 275 each carry an N-linked (GlcNAc...) asparagine glycan. Residues 282-302 traverse the membrane as a helical segment; sequence IFFFLLQTYFPATLMVMLSWV. Over 303–314 the chain is Cytoplasmic; that stretch reads SFWIDRRAVPAR. The helical transmembrane segment at 315 to 335 threads the bilayer; that stretch reads VPLGITTVLTMSTIITGVNAS. Topologically, residues 336-346 are extracellular; sequence MPRVSYIKAVD. The chain crosses the membrane as a helical span at residues 347–367; it reads IYLWVSFVFVFLSVLEYAAVN. Over 368–458 the chain is Cytoplasmic; the sequence is YLTTVQERKE…MRINTHAIDK (91 aa). The chain crosses the membrane as a helical span at residues 459-479; it reads YSRIIFPAAYILFNLIYWSIF. Serine 480 is a topological domain (extracellular).

It belongs to the ligand-gated ion channel (TC 1.A.9) family. Gamma-aminobutyric acid receptor (TC 1.A.9.5) subfamily. GABRR1 sub-subfamily. As to quaternary structure, three rho subunits (rho-1/GBRR1, rho-2/GBRR2 and rho-3/GBRR3) coassemble either to form functional homopentamers or heteropentamers. Rho-1/GBRR1 subunits can also associate with alpha-1/GBRA1 subunits to form a functional GABAAR. Interacts with SQSTM1. In terms of tissue distribution, expressed in the cerebellum.

It localises to the postsynaptic cell membrane. The protein localises to the cell membrane. The catalysed reaction is chloride(in) = chloride(out). Its activity is regulated as follows. Inhibited by TPMPA, a rho-specific antagonist, when forming a homopentamer. In contrast with other GABAARs, rho-1 GABAAR is not inhibited by bicuculline when forming a homopentamer. Its function is as follows. Rho subunit of the pentameric ligand-gated chloride channels responsible for mediating the effects of gamma-aminobutyric acid (GABA), the major inhibitory neurotransmitter in the brain. Rho-containing GABA-gated chloride channels are a subclass of GABA(A) receptors (GABAARs) entirely composed of rho subunits, where GABA molecules bind at the rho intersubunit interfaces. When activated by GABA, rho-GABAARs selectively allow the flow of chloride anions across the cell membrane down their electrochemical gradient. Rho-1 subunits are primarily expressed in retina where rho-1-containing GABAARs play a role in retinal neurotransmission. Rho-1 GABAARs are also involved in neuronal tonic (extrasynaptic) and phasic (synaptic) transmission in the Purkinje neurons of the cerebellum. Rho-1 GABAARs may also contribute to the regulation of glial development in the cerebellum by controlling extrasynaptic transmission. This is Gamma-aminobutyric acid receptor subunit rho-1 from Mus musculus (Mouse).